Consider the following 526-residue polypeptide: Major facilitator superfamily domain-containing protein 4A (526 aa).

The next 12 membrane-spanning stretches (helical) occupy residues 21 to 41 (LTYWSVFFSFGLCVAFLGPTI), 55 to 75 (ITLVFFSQQFFLFLGSTIGGF), 84 to 104 (LSSLAVSTLIISVVFAIIPLC), 107 to 127 (LLMLAFAMAVSGLAMGTIDTI), 142 to 162 (VFLQALHFFVGLGALVSPLIA), 215 to 235 (YAFWIMAIINLPVPIAIFVLV), 297 to 317 (LSFFGIHVLGGLVLFFSDGIV), 341 to 361 (GYLTCIFWAAITTGRLSAIPL), 377 to 397 (GVIVTVLLLLIFSNSSVFLFI), 401 to 421 (CLGLFISSIFPCMLALTEDIL), 430 to 450 (VLVTSAGMGEMVLQVLVGSVM), and 458 to 478 (FLLCGMIFGCLGFTFFTFLYF).

It belongs to the major facilitator superfamily.

The protein resides in the membrane. This chain is Major facilitator superfamily domain-containing protein 4A (mfsd4a), found in Danio rerio (Zebrafish).